The following is a 308-amino-acid chain: Taste receptor type 2 member 41 (308 aa).

The Extracellular segment spans residues 1–6 (MLSTVS). Residues 7 to 27 (VFFMSIFVLLCFLGILANGFI) traverse the membrane as a helical segment. The Cytoplasmic portion of the chain corresponds to 28-60 (VLMLSREWLWRGRLLPSDMILLSLGTSRFCQQC). The helical transmembrane segment at 61–81 (VGLVNSFYYSLHLVEYSRSLA) threads the bilayer. At 82 to 90 (RQLISLHMD) the chain is on the extracellular side. Residues 91–111 (FLNSATFWFGTWLSVLFCIKI) form a helical membrane-spanning segment. Residues 112 to 128 (ANFSHPAFLWLKWRFPA) are Cytoplasmic-facing. The helical transmembrane segment at 129 to 149 (LVPWLLLGSILVSFIVTLMFF) threads the bilayer. The Extracellular portion of the chain corresponds to 150–184 (WGNHTVYQAFLRRKFSGNTTFKEWNRRLEIDYFMP). N-linked (GlcNAc...) asparagine glycosylation is found at Asn152 and Asn167. The chain crosses the membrane as a helical span at residues 185-205 (LKLVTTSIPCSLFLVSILLLI). The Cytoplasmic portion of the chain corresponds to 206–239 (NSLRRHSQRMQHNAHSLQDPNTQAHSRALKSLIS). The chain crosses the membrane as a helical span at residues 240–260 (FLVLYALSYVSMVIDATVVIS). Over 261-264 (SDNV) the chain is Extracellular. Residues 265–285 (WYWPWQIILYLCMSVHPFILI) form a helical membrane-spanning segment. At 286 to 308 (TNNLKFRGTFRQLLLLARGFWVT) the chain is on the cytoplasmic side.

It belongs to the G-protein coupled receptor T2R family. As to expression, expressed in subsets of taste receptor cells of the tongue and palate epithelium and exclusively in gustducin-positive cells. Expressed in 15% taste bud cells in circumvallate and foliate papillae but only in 2% in fungiform papillae. Expressed in the duodenum, antrum and fundus (part of the stomach).

The protein localises to the membrane. Its function is as follows. Receptor that may play a role in the perception of bitterness and is gustducin-linked. May play a role in sensing the chemical composition of the gastrointestinal content. The activity of this receptor may stimulate alpha gustducin, mediate PLC-beta-2 activation and lead to the gating of TRPM5. This chain is Taste receptor type 2 member 41 (Tas2r41), found in Rattus norvegicus (Rat).